Reading from the N-terminus, the 342-residue chain is Farnesyl pyrophosphate synthase 1 (342 aa).

Isopentenyl diphosphate-binding residues include Lys47, Arg50, and Gln86. Mg(2+) is bound by residues Asp93 and Asp97. Residue Arg102 coordinates dimethylallyl diphosphate. Arg103 lines the isopentenyl diphosphate pocket. Lys190, Thr191, Gln229, Lys246, and Lys255 together coordinate dimethylallyl diphosphate.

The protein belongs to the FPP/GGPP synthase family. The cofactor is Mg(2+).

The protein resides in the cytoplasm. The enzyme catalyses isopentenyl diphosphate + dimethylallyl diphosphate = (2E)-geranyl diphosphate + diphosphate. It catalyses the reaction isopentenyl diphosphate + (2E)-geranyl diphosphate = (2E,6E)-farnesyl diphosphate + diphosphate. The protein operates within isoprenoid biosynthesis; farnesyl diphosphate biosynthesis; farnesyl diphosphate from geranyl diphosphate and isopentenyl diphosphate: step 1/1. Its pathway is isoprenoid biosynthesis; geranyl diphosphate biosynthesis; geranyl diphosphate from dimethylallyl diphosphate and isopentenyl diphosphate: step 1/1. Catalyzes the sequential condensation of isopentenyl pyrophosphate with the allylic pyrophosphates, dimethylallyl pyrophosphate, and then with the resultant geranylpyrophosphate to the ultimate product farnesyl pyrophosphate. This is Farnesyl pyrophosphate synthase 1 (FPS1) from Lupinus albus (White lupine).